We begin with the raw amino-acid sequence, 162 residues long: NAD(P)H-quinone oxidoreductase subunit N (162 aa).

It belongs to the complex I NdhN subunit family. In terms of assembly, NDH-1 can be composed of about 15 different subunits; different subcomplexes with different compositions have been identified which probably have different functions.

The protein resides in the cellular thylakoid membrane. It carries out the reaction a plastoquinone + NADH + (n+1) H(+)(in) = a plastoquinol + NAD(+) + n H(+)(out). It catalyses the reaction a plastoquinone + NADPH + (n+1) H(+)(in) = a plastoquinol + NADP(+) + n H(+)(out). Functionally, NDH-1 shuttles electrons from an unknown electron donor, via FMN and iron-sulfur (Fe-S) centers, to quinones in the respiratory and/or the photosynthetic chain. The immediate electron acceptor for the enzyme in this species is believed to be plastoquinone. Couples the redox reaction to proton translocation, and thus conserves the redox energy in a proton gradient. Cyanobacterial NDH-1 also plays a role in inorganic carbon-concentration. This chain is NAD(P)H-quinone oxidoreductase subunit N, found in Nostoc sp. (strain PCC 7120 / SAG 25.82 / UTEX 2576).